Reading from the N-terminus, the 274-residue chain is Diaminopimelate epimerase (274 aa).

Residues asparagine 11, glutamine 44, and asparagine 64 each contribute to the substrate site. Cysteine 73 acts as the Proton donor in catalysis. Substrate contacts are provided by residues 74 to 75 (GN), asparagine 157, asparagine 190, and 208 to 209 (ER). The Proton acceptor role is filled by cysteine 217. Residue 218–219 (GS) participates in substrate binding.

This sequence belongs to the diaminopimelate epimerase family. As to quaternary structure, homodimer.

It localises to the cytoplasm. The catalysed reaction is (2S,6S)-2,6-diaminopimelate = meso-2,6-diaminopimelate. Its pathway is amino-acid biosynthesis; L-lysine biosynthesis via DAP pathway; DL-2,6-diaminopimelate from LL-2,6-diaminopimelate: step 1/1. In terms of biological role, catalyzes the stereoinversion of LL-2,6-diaminopimelate (L,L-DAP) to meso-diaminopimelate (meso-DAP), a precursor of L-lysine and an essential component of the bacterial peptidoglycan. This chain is Diaminopimelate epimerase, found in Yersinia enterocolitica serotype O:8 / biotype 1B (strain NCTC 13174 / 8081).